Reading from the N-terminus, the 147-residue chain is Large ribosomal subunit protein bL9 (147 aa).

This sequence belongs to the bacterial ribosomal protein bL9 family.

Binds to the 23S rRNA. The sequence is that of Large ribosomal subunit protein bL9 from Cytophaga hutchinsonii (strain ATCC 33406 / DSM 1761 / CIP 103989 / NBRC 15051 / NCIMB 9469 / D465).